The sequence spans 205 residues: Putative 3-methyladenine DNA glycosylase (205 aa).

This sequence belongs to the DNA glycosylase MPG family.

In Bacillus cereus (strain G9842), this protein is Putative 3-methyladenine DNA glycosylase.